Here is a 338-residue protein sequence, read N- to C-terminus: Oligopeptide transport ATP-binding protein OppD (338 aa).

An ABC transporter domain is found at 7–257; it reads LEAKQVSVAF…PKHPYTRSLL (251 aa). 43 to 50 is a binding site for ATP; the sequence is GESGSGKS.

This sequence belongs to the ABC transporter superfamily. As to quaternary structure, the complex is composed of two ATP-binding proteins (OppD and OppF), two transmembrane proteins (OppB and OppC) and a solute-binding protein (OppA).

It is found in the cell membrane. It catalyses the reaction a [peptide](out) + ATP + H2O = a [peptide](in) + ADP + phosphate + H(+). Functionally, part of the ABC transporter complex OppABCDF involved in the uptake of oligopeptides. Probably responsible for energy coupling to the transport system. Essential for uptake of peptides larger than three amino acids and for growth in milk. The polypeptide is Oligopeptide transport ATP-binding protein OppD (oppD) (Lactococcus lactis subsp. lactis (strain IL1403) (Streptococcus lactis)).